Consider the following 189-residue polypeptide: Thymidine kinase (189 aa).

ATP is bound by residues Gly9–Thr16 and Asp85–Gln88. The Proton acceptor role is filled by Glu86. 4 residues coordinate Zn(2+): Cys143, Cys146, Cys180, and His183.

Belongs to the thymidine kinase family. In terms of assembly, homotetramer.

Its subcellular location is the cytoplasm. The enzyme catalyses thymidine + ATP = dTMP + ADP + H(+). In Streptococcus pyogenes serotype M3 (strain ATCC BAA-595 / MGAS315), this protein is Thymidine kinase.